A 1335-amino-acid chain; its full sequence is Regulatory-associated protein of mTOR (1335 aa).

Residues Ser44 and Ser122 each carry the phosphoserine modification. Residue Ser696 is modified to Phosphoserine; by MAPK8. A glycan (O-linked (GlcNAc) threonine) is linked at Thr700. Thr706 is modified (phosphothreonine; by MAPK8). Residues Ser719 and Ser721 each carry the phosphoserine; by RPS6KA1 modification. Ser722 is modified (phosphoserine; by AMPK and RPS6KA1). Position 738 is a phosphoserine (Ser738). Residues 749–771 (GSSVAFSPGNLSTSSSASSTLGS) form a disordered region. Low complexity predominate over residues 755–771 (SPGNLSTSSSASSTLGS). Ser791 bears the Phosphoserine mark. Residue Ser792 is modified to Phosphoserine; by AMPK. 2 positions are modified to phosphoserine: Ser836 and Ser855. The span at 853–866 (TSSLTQSAPASPTN) shows a compositional bias: polar residues. The segment at 853 to 942 (TSSLTQSAPA…GPDQTTDDAD (90 aa)) is disordered. Ser859 carries the phosphoserine; by MTOR modification. Phosphoserine; by MAPK8, MTOR and NLK is present on Ser863. Residue Thr865 is modified to Phosphothreonine. A Phosphoserine modification is found at Ser877. Residues 877 to 887 (SPPASSTSSCS) show a composition bias toward low complexity. A compositionally biased stretch (polar residues) spans 888–898 (LTNDVAKQTVS). Residues Lys932 and Lys948 each participate in a glycyl lysine isopeptide (Lys-Gly) (interchain with G-Cter in ubiquitin) cross-link. Phosphoserine is present on Ser982. WD repeat units lie at residues 1020-1061 (NRNP…DYFH), 1065-1106 (PRYT…EKNP), 1121-1160 (TTRGAGMVVDWEQETGLLMSSGDVRIVRIWDTDRETKVQD), 1164-1203 (GADSCVTSLSCDSHRSLIVAGLGDGSIRVYDRRMALSECR), 1209-1249 (EHTA…SVNV), 1251-1291 (QIVK…NNIK), and 1299-1335 (QRVGAISCLAFHPHWPHLAVGSNDYYISVYSVEKRVR). Lys1097 bears the N6-acetyllysine mark.

The protein belongs to the WD repeat RAPTOR family. In terms of assembly, part of the mechanistic target of rapamycin complex 1 (mTORC1) which contains MTOR, MLST8 and RPTOR. mTORC1 associates with AKT1S1/PRAS40, which inhibits its activity. mTORC1 associates with DEPTOR, which regulates its activity. mTORC1 binds to and is inhibited by FKBP12-rapamycin. Forms a complex with MTOR under both leucine-rich and -poor conditions. Interacts with (via TOS motifs) EIF4EBP1 and RPS6KB1; interaction is independent of its association with MTOR. Binds preferentially to poorly or non-phosphorylated forms of EIF4EBP1, and this binding is critical to the ability of MTOR to catalyze phosphorylation. Interacts with ULK1 in a nutrient-dependent manner; the interaction is reduced during starvation. Interacts with GTP-bound form of RagA/RRAGA or RagB/RRAGB and GDP-bound form of RagC/RRAGC or RagD/RRAGD, promoting recruitment of mTORC1 to the lysosomes. Interacts (when phosphorylated by AMPK) with 14-3-3 protein, leading to inhibition of its activity. Interacts with SPAG5; SPAG5 competes with MTOR for RPTOR-binding, resulting in decreased mTORC1 formation. Interacts with WAC; WAC positively regulates MTOR activity by promoting the assembly of the TTT complex composed of TELO2, TTI1 and TTI2 and the RUVBL complex composed of RUVBL1 and RUVBL2 into the TTT-RUVBL complex which leads to the dimerization of the mTORC1 complex and its subsequent activation. Interacts with G3BP1. The complex formed with G3BP1 and SPAG5 is increased by oxidative stress. Interacts with HTR6. Interacts with PIH1D1. Interacts with LARP1. Interacts with BRAT1. Interacts with SIK3. Interacts with SLC38A7; this interaction mediates the recruitment of mTORC1 to the lysosome and its subsequent activation. Insulin-stimulated phosphorylation at Ser-863 by MTOR and MAPK8 regulates mTORC1 activity. Phosphorylated at Ser-863 by NLK in response to stress, disrupting the interaction with small GTPases Rag (RagA/RRAGA, RagB/RRAGB, RagC/RRAGC and/or RagD/RRAGD), thereby preventing lysosome recruitment and activation of the mTORC1 complex. Osmotic stress also induces phosphorylation at Ser-696, Thr-706 and Ser-863 by MAPK8. Ser-863 phosphorylation is required for phosphorylation at Ser-855 and Ser-859. In response to nutrient limitation, phosphorylated at Ser-722 and Ser-792 by AMPK; phosphorylation promotes interaction with 14-3-3 proteins, leading to negative regulation of the mTORC1 complex. Phosphorylation at Ser-722 and Ser-792 by AMPK in response to glucose starvation inhibits O-GlcNAcylation by OGT and subsequent activation of mTORC1. In response to growth factors, phosphorylated at Ser-719, Ser-721 and Ser-722 by RPS6KA1, which stimulates mTORC1 activity. Phosphorylation at Ser-791 by PKA downstream of cAMP inhibits the mTORC1 complex. Phosphorylated at Ser-877 by TBK1, leading to negative regulation of the mTORC1 complex. Post-translationally, O-GlcNAcylated by OGT upon glucose sufficiency, promoting interaction with small GTPases Rag (RagA/RRAGA, RagB/RRAGB, RagC/RRAGC and/or RagD/RRAGD) and subsequent recruitment of mTORC1 to lysosomal membranes, leading to activation of the mTORC1 complex. Phosphorylation at Ser-722 and Ser-792 by AMPK in response to glucose starvation inhibits O-GlcNAcylation. In terms of processing, acetylation at Lys-1097 by EP300/p300 in response to leucine metabolite acetyl-coA promotes its activity, leading to activation of the mTORC1 complex. Acetylation is decreased in response to fasting. Phosphorylated at Ser-877 by TBK1, leading to negative regulation of the mTORC1 complex. Ubiquitinated, leading to its degradation by the proteasome. Deubiquitinated by OTUB1 via a non-catalytic mechanism. Ubiquitinated by an E3 ubiquitin ligase complex containing VHL.

Its subcellular location is the cytoplasm. It is found in the lysosome. The protein localises to the cytoplasmic granule. In terms of biological role, component of the mechanistic target of rapamycin complex 1 (mTORC1), an evolutionarily conserved central nutrient sensor that stimulates anabolic reactions and macromolecule biosynthesis to promote cellular biomass generation and growth. In response to nutrients, growth factors or amino acids, mTORC1 is recruited to the lysosome membrane and promotes protein, lipid and nucleotide synthesis by phosphorylating several substrates, such as ribosomal protein S6 kinase (RPS6KB1 and RPS6KB2) and EIF4EBP1 (4E-BP1). In the same time, it inhibits catabolic pathways by phosphorylating the autophagy initiation components ULK1 and ATG13, as well as transcription factor TFEB, a master regulators of lysosomal biogenesis and autophagy. The mTORC1 complex is inhibited in response to starvation and amino acid depletion. Within the mTORC1 complex, RPTOR acts both as a molecular adapter, which (1) mediates recruitment of mTORC1 to lysosomal membranes via interaction with small GTPases Rag (RagA/RRAGA, RagB/RRAGB, RagC/RRAGC and/or RagD/RRAGD), and a (2) substrate-specific adapter, which promotes substrate specificity by binding to TOS motif-containing proteins and direct them towards the active site of the MTOR kinase domain for phosphorylation. mTORC1 complex regulates many cellular processes, such as odontoblast and osteoclast differentiation or neuronal transmission. mTORC1 complex in excitatory neuronal transmission is required for the prosocial behavior induced by the psychoactive substance lysergic acid diethylamide (LSD). The chain is Regulatory-associated protein of mTOR from Mus musculus (Mouse).